The sequence spans 186 residues: Acireductone dioxygenase (186 aa).

His96, His98, Glu102, and His140 together coordinate Fe(2+). Positions 96, 98, 102, and 140 each coordinate Ni(2+).

This sequence belongs to the acireductone dioxygenase (ARD) family. In terms of assembly, monomer. Requires Fe(2+) as cofactor. Ni(2+) serves as cofactor.

It catalyses the reaction 1,2-dihydroxy-5-(methylsulfanyl)pent-1-en-3-one + O2 = 3-(methylsulfanyl)propanoate + CO + formate + 2 H(+). The catalysed reaction is 1,2-dihydroxy-5-(methylsulfanyl)pent-1-en-3-one + O2 = 4-methylsulfanyl-2-oxobutanoate + formate + 2 H(+). Its pathway is amino-acid biosynthesis; L-methionine biosynthesis via salvage pathway; L-methionine from S-methyl-5-thio-alpha-D-ribose 1-phosphate: step 5/6. Catalyzes 2 different reactions between oxygen and the acireductone 1,2-dihydroxy-3-keto-5-methylthiopentene (DHK-MTPene) depending upon the metal bound in the active site. Fe-containing acireductone dioxygenase (Fe-ARD) produces formate and 2-keto-4-methylthiobutyrate (KMTB), the alpha-ketoacid precursor of methionine in the methionine recycle pathway. Ni-containing acireductone dioxygenase (Ni-ARD) produces methylthiopropionate, carbon monoxide and formate, and does not lie on the methionine recycle pathway. In Methylococcus capsulatus (strain ATCC 33009 / NCIMB 11132 / Bath), this protein is Acireductone dioxygenase.